The primary structure comprises 1065 residues: Presequence protease, mitochondrial (1065 aa).

A mitochondrion-targeting transit peptide spans 1-42; the sequence is MLRSFSGAGKCKCRIPVSRQPVCGRSLRISSTLTPWNQSRRA. H117 serves as a coordination point for Zn(2+). E120 serves as the catalytic Proton acceptor. H121 serves as a coordination point for Zn(2+). Residue E193 is part of the active site. E230 serves as a coordination point for Zn(2+).

This sequence belongs to the peptidase M16 family. PreP subfamily. As to quaternary structure, monomer and homodimer; homodimerization is induced by binding of the substrate. Zn(2+) is required as a cofactor.

Its subcellular location is the mitochondrion intermembrane space. It localises to the mitochondrion matrix. Degrades mitochondrial transit peptides after their cleavage in the intermembrane space or in the matrix, and presequence peptides; clearance of these peptides is required to keep the presequence processing machinery running. Preferentially cleaves the N-terminal side of paired basic amino acid residues. Also degrades other unstructured peptides. May function as an ATP-dependent peptidase as opposed to a metalloendopeptidase. In Aspergillus fumigatus (strain ATCC MYA-4609 / CBS 101355 / FGSC A1100 / Af293) (Neosartorya fumigata), this protein is Presequence protease, mitochondrial (cym1).